The primary structure comprises 274 residues: Merozoite surface protein 2 (274 aa).

An N-terminal signal peptide occupies residues 1-20 (MKVIKTLSIINFFIFVTFNI). N-linked (GlcNAc...) asparagine glycosylation is found at N22 and N36. The segment at 43–234 (MAESKPPTGT…SDSQKECTDG (192 aa)) is disordered. The polymorphic region stretch occupies residues 44 to 200 (AESKPPTGTG…EQTESPELQS (157 aa)). 2 consecutive repeat copies span residues 53 to 62 (GASGSAGSGA) and 63 to 72 (GASGSAGSGD). A 2 X 10 AA tandem repeats of G-A-S-G-S-A-G-S-G-[AD] region spans residues 53–72 (GASGSAGSGAGASGSAGSGD). Positions 53–72 (GASGSAGSGAGASGSAGSGD) are enriched in gly residues. Low complexity predominate over residues 91 to 121 (SSSTPATTTTTTTTTTTTTTNDAEASTSTSS). 3 stretches are compositionally biased toward polar residues: residues 122–131 (ENPNHNNAET), 140–167 (QKSN…NVPP), and 174–202 (KSPT…QSAP). N151 carries N-linked (GlcNAc...) asparagine glycosylation. A glycan (N-linked (GlcNAc...) asparagine) is linked at N223. Cysteines 231 and 239 form a disulfide. The N-linked (GlcNAc...) asparagine glycan is linked to N248. The GPI-anchor amidated asparagine moiety is linked to residue N248. Residues 249–274 (SSNIASINKFVVLISAKLVLSFAIFI) constitute a propeptide, removed in mature form.

The protein localises to the cell membrane. Functionally, may play a role in the merozoite attachment to the erythrocyte. The polypeptide is Merozoite surface protein 2 (Plasmodium falciparum (isolate kf1916)).